Consider the following 392-residue polypeptide: Galactokinase (392 aa).

A substrate-binding site is contributed by Glu37–Asp40. Residues Ser71 and Gly128–Ser134 each bind ATP. Residues Ser134 and Glu166 each coordinate Mg(2+). Residue Asp178 is the Proton acceptor of the active site. Tyr228 contributes to the substrate binding site.

The protein belongs to the GHMP kinase family. GalK subfamily.

The protein resides in the cytoplasm. The catalysed reaction is alpha-D-galactose + ATP = alpha-D-galactose 1-phosphate + ADP + H(+). It participates in carbohydrate metabolism; galactose metabolism. Catalyzes the transfer of the gamma-phosphate of ATP to D-galactose to form alpha-D-galactose-1-phosphate (Gal-1-P). The polypeptide is Galactokinase (Streptococcus pneumoniae (strain ATCC BAA-255 / R6)).